We begin with the raw amino-acid sequence, 77 residues long: Conotoxin VnMEKL-0223 (77 aa).

A signal peptide spans 1–19 (MQKLTILLLVAAVLMSTQA). The propeptide occupies 20–37 (LIKGGGEKRPKEKIKFLS). 3 disulfide bridges follow: Cys-51-Cys-65, Cys-58-Cys-69, and Cys-64-Cys-74.

The protein belongs to the conotoxin O2 superfamily. In terms of tissue distribution, expressed by the venom duct.

The protein resides in the secreted. The protein is Conotoxin VnMEKL-0223 of Conus ventricosus (Mediterranean cone).